Here is a 318-residue protein sequence, read N- to C-terminus: Acyl-CoA dehydrogenase IpdE2 (318 aa).

FAD-binding residues include arginine 210 and glycine 277.

The protein belongs to the acyl-CoA dehydrogenase family. As to quaternary structure, heterotetramer composed of 2 IpdE1 subunits and 2 IpdE2 subunits. FAD serves as cofactor.

It carries out the reaction 3-[(3aS,4S,5R,7aS)-5-hydroxy-7a-methyl-1-oxo-octahydro-1H-inden-4-yl]propanoyl-CoA + A = (2E)-3-[(3aS,4S,5R,7aS)-5-hydroxy-7a-methyl-1-oxo-octahydro-1H-inden-4-yl]prop-2-enoyl-CoA + AH2. Its pathway is steroid metabolism; cholesterol degradation. Its function is as follows. Involved in cholesterol degradation. Catalyzes the dehydrogenation of 5OH-HIP-CoA to 5OH-HIPE-CoA. Can also use octanoyl-CoA and dihydroferuloyl-CoA, with lower efficiency. Cannot use 3-oxo-4-pregnene-20-carboxyl-CoA (3-OPC-CoA). The polypeptide is Acyl-CoA dehydrogenase IpdE2 (Mycobacterium tuberculosis (strain ATCC 25618 / H37Rv)).